A 428-amino-acid chain; its full sequence is Nuclear hormone receptor family member nhr-44 (428 aa).

Positions 21-98 (SEKCLVCFQP…LGMKPDNIQR (78 aa)) form a DNA-binding region, nuclear receptor. NR C4-type zinc fingers lie at residues 24–44 (CLVCFQPSHGNHFGVDSCRAC) and 61–86 (CREGDNKCTPDEWGRWSCKRCRSDKC). Residues 181–427 (SLEQLAFGLQ…LSHPEMFQFS (247 aa)) form the NR LBD domain.

This sequence belongs to the nuclear hormone receptor family.

The protein resides in the nucleus. Functionally, orphan nuclear receptor. The chain is Nuclear hormone receptor family member nhr-44 (nhr-44) from Caenorhabditis elegans.